Consider the following 189-residue polypeptide: Probable nicotinate-nucleotide adenylyltransferase (189 aa).

Belongs to the NadD family.

It carries out the reaction nicotinate beta-D-ribonucleotide + ATP + H(+) = deamido-NAD(+) + diphosphate. It functions in the pathway cofactor biosynthesis; NAD(+) biosynthesis; deamido-NAD(+) from nicotinate D-ribonucleotide: step 1/1. Its function is as follows. Catalyzes the reversible adenylation of nicotinate mononucleotide (NaMN) to nicotinic acid adenine dinucleotide (NaAD). The protein is Probable nicotinate-nucleotide adenylyltransferase of Bacillus cereus (strain ATCC 10987 / NRS 248).